Here is a 1149-residue protein sequence, read N- to C-terminus: FH2 domain-containing protein 1 (1149 aa).

Disordered regions lie at residues leucine 18–glycine 79, asparagine 464–serine 540, glutamate 554–proline 660, and serine 681–lysine 1149. 2 stretches are compositionally biased toward pro residues: residues alanine 33–proline 48 and proline 56–glycine 79. Positions glycine 88–glutamine 483 constitute an FH2 domain. The segment covering asparagine 464–arginine 485 has biased composition (basic and acidic residues). Polar residues predominate over residues tyrosine 486–aspartate 504. Serine 501 is subject to Phosphoserine. Positions proline 522 to proline 532 are enriched in low complexity. 2 stretches are compositionally biased toward polar residues: residues glutamate 554 to arginine 575 and serine 591 to lysine 604. Residues serine 645 and serine 655 each carry the phosphoserine modification. Residues serine 681–leucine 693 are compositionally biased toward polar residues. A compositionally biased stretch (basic and acidic residues) spans methionine 784–glutamate 795. Residues glycine 801–serine 822 show a composition bias toward low complexity. Positions proline 844–alanine 856 are enriched in basic and acidic residues. The segment covering glutamate 926–threonine 947 has biased composition (polar residues). The interval glutamate 960–serine 1086 is MTBD; microtubule-binding domain. Positions proline 965–arginine 974 are enriched in low complexity. Polar residues-rich tracts occupy residues alanine 1042 to serine 1052 and threonine 1064 to glutamine 1074. Over residues glycine 1123–aspartate 1134 the composition is skewed to basic and acidic residues.

As to quaternary structure, interacts with CEP170. As to expression, brain, heart and lung (at protein level).

It is found in the golgi apparatus. The protein localises to the cell projection. Its subcellular location is the cilium. Functionally, microtubule-associated formin which regulates both actin and microtubule dynamics. Induces microtubule acetylation and stabilization and actin stress fiber formation. Regulates Golgi ribbon formation. Required for normal cilia assembly. Early in cilia assembly, may assist in the maturation and positioning of the centrosome/basal body, and once cilia assembly has initiated, may also promote cilia elongation by inhibiting disassembly. The polypeptide is FH2 domain-containing protein 1 (Fhdc1) (Mus musculus (Mouse)).